The sequence spans 180 residues: Acireductone dioxygenase (180 aa).

Fe(2+) contacts are provided by H97, H99, E103, and H141. Positions 97, 99, 103, and 141 each coordinate Ni(2+).

Belongs to the acireductone dioxygenase (ARD) family. In terms of assembly, monomer. The cofactor is Fe(2+). It depends on Mg(2+) as a cofactor. Requires Ni(2+) as cofactor. Mn(2+) serves as cofactor. Co(2+) is required as a cofactor.

The enzyme catalyses 1,2-dihydroxy-5-(methylsulfanyl)pent-1-en-3-one + O2 = 3-(methylsulfanyl)propanoate + CO + formate + 2 H(+). The catalysed reaction is 1,2-dihydroxy-5-(methylsulfanyl)pent-1-en-3-one + O2 = 4-methylsulfanyl-2-oxobutanoate + formate + 2 H(+). Its pathway is amino-acid biosynthesis; L-methionine biosynthesis via salvage pathway; L-methionine from S-methyl-5-thio-alpha-D-ribose 1-phosphate: step 5/6. Functionally, catalyzes 2 different reactions between oxygen and the acireductone 1,2-dihydroxy-3-keto-5-methylthiopentene (DHK-MTPene) depending upon the metal bound in the active site. Fe-containing acireductone dioxygenase (Fe-ARD) produces formate and 2-keto-4-methylthiobutyrate (KMTB), the alpha-ketoacid precursor of methionine in the methionine recycle pathway. Ni-containing acireductone dioxygenase (Ni-ARD) produces methylthiopropionate, carbon monoxide and formate, and does not lie on the methionine recycle pathway. In Klebsiella oxytoca, this protein is Acireductone dioxygenase (mtnD).